Consider the following 367-residue polypeptide: Putative F-box protein At3g21130 (367 aa).

Positions 4 to 50 (KRNTVYLSEDLIVEILSRVSAVSLARLRTTSKRWNALVKDERLAKKH) constitute an F-box domain.

This is Putative F-box protein At3g21130 from Arabidopsis thaliana (Mouse-ear cress).